A 390-amino-acid polypeptide reads, in one-letter code: Isoaspartyl dipeptidase (390 aa).

Residues histidine 68 and histidine 70 each contribute to the Zn(2+) site. Residues 75-77, threonine 106, and tyrosine 137 contribute to the substrate site; that span reads GGE. A Zn(2+)-binding site is contributed by lysine 162. Lysine 162 bears the N6-carboxylysine mark. Residue arginine 169 participates in substrate binding. Zn(2+)-binding residues include histidine 201 and histidine 230. Residue arginine 233 participates in substrate binding. Aspartate 285 is a Zn(2+) binding site. The Proton acceptor role is filled by aspartate 285. Residue serine 289 participates in substrate binding.

It belongs to the peptidase M38 family. It depends on Zn(2+) as a cofactor. Co(2+) is required as a cofactor. In terms of processing, carboxylation allows a single lysine to coordinate two zinc ions.

It is found in the cytoplasm. Its activity is regulated as follows. P-hydroxymercuribenzoate causes a slight inhibition (8 to 17 %). Iodoacetamide, o-iodosobenzoate and ammonium persulfate do not inhibit the enzyme activity. Catalyzes the hydrolytic cleavage of a subset of L-isoaspartyl (L-beta-aspartyl) dipeptides. Used to degrade proteins damaged by L-isoaspartyl residues formation. The best substrate for the enzyme reported thus far is iso-Asp-Leu. This is Isoaspartyl dipeptidase (iadA) from Escherichia coli (strain K12).